Consider the following 428-residue polypeptide: Serine--tRNA ligase (428 aa).

L-serine is bound at residue 231–233 (TSE). ATP contacts are provided by residues 262-264 (RRE) and Val278. Glu285 provides a ligand contact to L-serine. An ATP-binding site is contributed by 349 to 352 (ELTS). Thr384 is an L-serine binding site.

It belongs to the class-II aminoacyl-tRNA synthetase family. Type-1 seryl-tRNA synthetase subfamily. In terms of assembly, homodimer. The tRNA molecule binds across the dimer.

The protein resides in the cytoplasm. It carries out the reaction tRNA(Ser) + L-serine + ATP = L-seryl-tRNA(Ser) + AMP + diphosphate + H(+). The catalysed reaction is tRNA(Sec) + L-serine + ATP = L-seryl-tRNA(Sec) + AMP + diphosphate + H(+). The protein operates within aminoacyl-tRNA biosynthesis; selenocysteinyl-tRNA(Sec) biosynthesis; L-seryl-tRNA(Sec) from L-serine and tRNA(Sec): step 1/1. Catalyzes the attachment of serine to tRNA(Ser). Is also able to aminoacylate tRNA(Sec) with serine, to form the misacylated tRNA L-seryl-tRNA(Sec), which will be further converted into selenocysteinyl-tRNA(Sec). This is Serine--tRNA ligase from Bifidobacterium adolescentis (strain ATCC 15703 / DSM 20083 / NCTC 11814 / E194a).